The chain runs to 335 residues: Methyltransferase pgmE (335 aa).

The protein belongs to the methyltransferase superfamily.

The protein operates within pigment biosynthesis. Its pathway is secondary metabolite biosynthesis. In terms of biological role, methyltransferase; part of the gene cluster that mediates the biosynthesis of pleosporalin A, ascomycone A, as well as a third cryptic naphthoquinone derived pigment, all responsible for the coloration of conidia. Essential for the production of pleosporalin A, but not the 2 other final products. The pathway begins with the biosynthesis of the cyclized heptaketide 3-acetonyl-1,6,8-trihydroxy-2-naphthaldehyde by the NR-PKS pgmA. The C-6 hydroxyl group is further methylated by the O-methyltransferase pgmB to yield fusarubinaldehyde which is in turn oxidized by the cytochrome P450 monooxygenase pgmC at C-9. The C-1 hydroxyl group is then methylated spontaneously. Although pgmE, pgmD and pgmH are essential for the production of pleosporalin A, it is not the case for the 2 other final products and it remains difficult to assign a specific function to each enzyme. PgmF and pgmG seem not to be involved in pigment biosynthesis although they were regulated by the cluster-specific transcription factor pgmR. The protein is Methyltransferase pgmE of Aspergillus terreus.